Reading from the N-terminus, the 302-residue chain is Coenzyme PQQ synthesis protein B (302 aa).

The protein belongs to the PqqB family.

It participates in cofactor biosynthesis; pyrroloquinoline quinone biosynthesis. Its function is as follows. May be involved in the transport of PQQ or its precursor to the periplasm. In Azotobacter vinelandii (strain DJ / ATCC BAA-1303), this protein is Coenzyme PQQ synthesis protein B.